The sequence spans 891 residues: Mating-type protein A-alpha Y1 (891 aa).

A DNA-binding region (homeobox) is located at residues 146 to 205; it reads SKKPRPKFHSEYTPLLELYFRFNAYPTYADRRVLAEKTGMLTRQITVWFQNHRRRAKGPL. Disordered regions lie at residues 241–291, 319–339, 393–437, 610–718, and 800–822; these read PITL…PSTL, DIEM…LPKG, TRKP…RRVS, ARRK…EQSL, and MNWT…GGDE. Residues 244–257 show a composition bias toward polar residues; the sequence is LGNNKTPDLTTSSR. Basic residues predominate over residues 328–337; the sequence is PKRRKMKKLP. Low complexity predominate over residues 427 to 437; the sequence is ASSTVPSRRVS. A compositionally biased stretch (basic residues) spans 627–638; the sequence is KKDKKERKKAGL. Composition is skewed to low complexity over residues 651–667 and 676–710; these read VSSR…TSAR and QPSS…SMPS. Polar residues predominate over residues 800–818; the sequence is MNWTASVGSNAQDPASQES.

It is found in the nucleus. Functionally, specifies A-alpha-1 mating-type. May regulate the expression of genes specific to the homokaryotic cell type. The sequence is that of Mating-type protein A-alpha Y1 from Schizophyllum commune (Split gill fungus).